A 264-amino-acid polypeptide reads, in one-letter code: Phosphonates import ATP-binding protein PhnC (264 aa).

The ABC transporter domain maps to Leu7–Phe254. Residue Gly39–Ser46 coordinates ATP.

The protein belongs to the ABC transporter superfamily. Phosphonates importer (TC 3.A.1.9.1) family. The complex is composed of two ATP-binding proteins (PhnC), two transmembrane proteins (PhnE) and a solute-binding protein (PhnD).

It localises to the cell inner membrane. The catalysed reaction is phosphonate(out) + ATP + H2O = phosphonate(in) + ADP + phosphate + H(+). Its function is as follows. Part of the ABC transporter complex PhnCDE involved in phosphonates import. Responsible for energy coupling to the transport system. The chain is Phosphonates import ATP-binding protein PhnC from Caulobacter vibrioides (strain ATCC 19089 / CIP 103742 / CB 15) (Caulobacter crescentus).